The primary structure comprises 133 residues: Vascular endothelial growth factor homolog (133 aa).

Residues 1 to 20 (MKLLVGILVAVCLHQYLLNA) form the signal peptide. Intrachain disulfides connect cysteine 36–cysteine 78, cysteine 67–cysteine 112, and cysteine 71–cysteine 114. Asparagine 85 carries an N-linked (GlcNAc...) asparagine; by host glycan.

This sequence belongs to the PDGF/VEGF growth factor family. In terms of assembly, homodimer; disulfide-linked.

It is found in the secreted. Induces endothelial proliferation. The sequence is that of Vascular endothelial growth factor homolog from Orf virus (strain NZ2) (OV NZ-2).